Here is a 215-residue protein sequence, read N- to C-terminus: Cardiolipin synthase (CMP-forming) (215 aa).

Transmembrane regions (helical) follow at residues 29–49 (IPNI…WLIL), 60–80 (GWAL…GKLA), 117–137 (LWLT…VGIL), 158–178 (LMYA…ASLA), and 179–199 (AVFG…AGVL).

Belongs to the CDP-alcohol phosphatidyltransferase class-I family. A divalent metal cation is required as a cofactor.

It is found in the cell membrane. It catalyses the reaction a CDP-1,2-diacyl-sn-glycerol + a 1,2-diacyl-sn-glycero-3-phospho-(1'-sn-glycerol) = a cardiolipin + CMP + H(+). Catalyzes the synthesis of cardiolipin (CL) (diphosphatidylglycerol) by specifically transferring a phosphatidyl group from CDP-diacylglycerol to phosphatidylglycerol (PG). This Streptomyces coelicolor (strain ATCC BAA-471 / A3(2) / M145) protein is Cardiolipin synthase (CMP-forming).